The chain runs to 159 residues: Cytochrome c-type biogenesis protein CcmE (159 aa).

Residues Met1–Arg23 are Cytoplasmic-facing. The helical; Signal-anchor for type II membrane protein transmembrane segment at Leu24 to Ala44 threads the bilayer. The Periplasmic portion of the chain corresponds to Met45–Lys159. 2 residues coordinate heme: His138 and Tyr142.

The protein belongs to the CcmE/CycJ family.

It localises to the cell inner membrane. Its function is as follows. Heme chaperone required for the biogenesis of c-type cytochromes. Transiently binds heme delivered by CcmC and transfers the heme to apo-cytochromes in a process facilitated by CcmF and CcmH. This chain is Cytochrome c-type biogenesis protein CcmE, found in Bartonella tribocorum (strain CIP 105476 / IBS 506).